A 3677-amino-acid chain; its full sequence is Dystrophin (3677 aa).

The interval 1 to 240 is actin-binding; it reads MLWWEEVEDC…YITSLFQVLP (240 aa). Calponin-homology (CH) domains are found at residues 15–119 and 134–240; these read DVQK…LHWQ and TNSE…QVLP. Positions 63-72 are ANK2- and ANK-3 binding; sequence PKEKGSTRVH. Spectrin repeat units follow at residues 342–447, 451–557, 560–668, 728–828, 831–935, 944–1046, 1049–1154, 1163–1264, 1268–1464, 1469–1569, 1573–1676, 1680–1777, 1779–1875, 1878–1980, 2001–2098, 2106–2209, 2215–2316, 2317–2415, 2465–2569, 2576–2678, 2682–2786, 2800–2922, and 2927–3032; these read LDSY…SNLH, MDLQ…LLQD, LKWQ…QISQ, DITE…NWLE, NNII…ELQT, RYQE…KLEE, NKLR…EALK, LQKD…TLEE, CWHE…LFQK, EQRL…QLEK, LSRK…NLLL, KHME…TGKA, IPLK…KALE, HQWY…TLHE, YLTE…ERQG, KWRH…RVEE, SEFQ…GELE, VHIK…LRTK, ADFN…QLNE, QWLE…ALEE, LLQQ…KKSL, KRLH…RKID, and RLQE…QLHE. An interaction with SYNM region spans residues 1416 to 1914; it reads SDLTSHEISL…PEPRDERKIK (499 aa). One can recognise a WW domain in the interval 3047–3080; that stretch reads TSVQGPWERAISPNKVPYYINHETQTTCWDHPKM. Residues 3050–3400 form an interaction with SYNM region; that stretch reads QGPWERAISP…TVLEGDNMET (351 aa). The ZZ-type; degenerate zinc-finger motif lies at 3300 to 3356; the sequence is KHQAKCNICKECPIIGFRYRSLKHFNYDICQSCFFSGRVAKGHKMHYPMVEYCTPTT. 4 residues coordinate Zn(2+): Cys-3305, Cys-3308, Cys-3329, and Cys-3332. Positions 3458–3510 are binds to SNTB1; sequence DDEHLLIQHYCQSLNQDSPLSQPRSPAQILISLESEERGELERILADLEEENR. A phosphoserine mark is found at Ser-3475, Ser-3482, and Ser-3492. Disordered regions lie at residues 3520 to 3546 and 3595 to 3677; these read KQQHEHKGLSPLPSPPEMMPTSPQSPR and EAKV…EDTM. 2 stretches are compositionally biased toward polar residues: residues 3599-3618 and 3654-3664; these read NGTTVSSPSTSLQRSDSSQP and QLNNSFPSSRG. A phosphoserine mark is found at Ser-3604, Ser-3605, Ser-3609, Ser-3615, Ser-3616, and Ser-3658.

In terms of assembly, interacts with SYNM. Interacts with the syntrophins SNTG1 and SNTG2. Interacts with KRT19. Component of the dystrophin-associated glycoprotein complex which is composed of three subcomplexes: a cytoplasmic complex comprised of DMD (or UTRN), DTNA and a number of syntrophins, such as SNTB1, SNTB2, SNTG1 and SNTG2, the transmembrane dystroglycan complex, and the sarcoglycan-sarcospan complex. Interacts with DAG1 (betaDAG1) with DMD; the interaction is inhibited by phosphorylation on the PPXY motif of DAG1. Interacts with SYNM; SNTA1 and SNTB1. Interacts with CMYA5. Directly interacts with ANK2 and ANK3; these interactions do not interfere with betaDAG1-binding and are necessary for proper localization in muscle cells. Identified in a dystroglycan complex that contains at least PRX, DRP2, UTRN, DMD and DAG1. Interacts with DTNB. Interacts with PGM5; the interaction is direct. Interacts with NOS1; localizes NOS1 to sarcolemma in muscle cells. In terms of tissue distribution, strongly expressed in skeletal muscle and weak expression observed in newborn brain which increases in adult brain.

It localises to the cell membrane. The protein localises to the sarcolemma. Its subcellular location is the cytoplasm. The protein resides in the cytoskeleton. It is found in the postsynaptic cell membrane. Anchors the extracellular matrix to the cytoskeleton via F-actin. Ligand for dystroglycan. Component of the dystrophin-associated glycoprotein complex which accumulates at the neuromuscular junction (NMJ) and at a variety of synapses in the peripheral and central nervous systems and has a structural function in stabilizing the sarcolemma. Also implicated in signaling events and synaptic transmission. The polypeptide is Dystrophin (Dmd) (Rattus norvegicus (Rat)).